Here is a 325-residue protein sequence, read N- to C-terminus: Glyoxylate/hydroxypyruvate reductase B (325 aa).

Active-site residues include Arg237 and Glu266. His285 functions as the Proton donor in the catalytic mechanism.

This sequence belongs to the D-isomer specific 2-hydroxyacid dehydrogenase family. GhrB subfamily. As to quaternary structure, homodimer.

The protein localises to the cytoplasm. It catalyses the reaction glycolate + NADP(+) = glyoxylate + NADPH + H(+). The enzyme catalyses (R)-glycerate + NAD(+) = 3-hydroxypyruvate + NADH + H(+). It carries out the reaction (R)-glycerate + NADP(+) = 3-hydroxypyruvate + NADPH + H(+). In terms of biological role, catalyzes the NADPH-dependent reduction of glyoxylate and hydroxypyruvate into glycolate and glycerate, respectively. The sequence is that of Glyoxylate/hydroxypyruvate reductase B from Serratia proteamaculans (strain 568).